The following is a 228-amino-acid chain: Probable GTP-binding protein EngB (228 aa).

An EngB-type G domain is found at 48–222 (YGLEVAFVGY…QFVLNNWFSS (175 aa)). Residues 56 to 63 (GYSNSGKS), 83 to 87 (GRTRL), 101 to 104 (DFPG), 168 to 171 (NKMD), and 201 to 203 (FSS) contribute to the GTP site. Residues Ser-63 and Thr-85 each contribute to the Mg(2+) site.

It belongs to the TRAFAC class TrmE-Era-EngA-EngB-Septin-like GTPase superfamily. EngB GTPase family. It depends on Mg(2+) as a cofactor.

Functionally, necessary for normal cell division and for the maintenance of normal septation. This is Probable GTP-binding protein EngB from Buchnera aphidicola subsp. Baizongia pistaciae (strain Bp).